The chain runs to 883 residues: MSDSVAPDVPVIREGKNPAQHRDRTTVDREALSPMMRHYVDLKDEYPQTILLYRMGDFYETFFEDACTIAQALELVLTSRQSGNEVGRVAMAGIPHHQLDRYSRLLVEKGFAVAICDQMEDPAQAQGLVKREVTRVITPGTLLEEGMLNARSNNFLAAFVLAGNHWGLAYADISTGEFLTTQFSERETLAQELLRLQPSEVLFPTDAPDIQQILRPGEQSDLLPEGLPNQFCYSLRSQTSFTQAEARQRIQEVYGVRSLEGLGCEHLPLAVRAAGGLLAYLEATQKDTHIPLQPLATYTLSQYLVLDHQSRRNLELTQTSRDGTFRGSLLWAIDRTRTAMGSRALRRWLLQPLLDLNDIQARQAAITELLPQTGFRKELQNQLQKIYDLERLAGRAGSGTANARDLVALAESLGQLTELSHKVAKCEAQYLQALQTVPPILDQLAQRLRAHLVESPPISLTEGGLIKPSVNPELDQMRQQIVSDQQWIANLEKDERERTGISTLKVGFNKAFGYFISISRAKADQAPDDYIRKQTLTNEERFITPELKEREARIFTAQTEQFQLEYDLFVTLRTEVGEQASLIRTVAAAVSAVDILVGLTEVAVYQGYCCPTMSDSREIQILDGRHPVVEQSLPPGFFVPNATELGSAPSAELTPHPDLVILTGPNASGKSCYLRQVGLIQLMAQIGSYVPAQSARLGICDRIFTRVGAVDDLATGQSTFMVEMNETANILNHASSKSLVLLDEIGRGTATFDGLAIAWSVAEHLAAVIQARTIFATHYHELNELASLVENVANYQVLVKELPDQIIFLHQVCPGGASRSYGIEAGRLAGLPPSVIKRAKQVMKQIEQHSKIAVGLRKGNTQPRARKSSAETEAKTQQFELPF.

A disordered region spans residues 1-25 (MSDSVAPDVPVIREGKNPAQHRDRT). The segment covering 11–25 (VIREGKNPAQHRDRT) has biased composition (basic and acidic residues). 664–671 (GPNASGKS) contributes to the ATP binding site. A disordered region spans residues 857–883 (RKGNTQPRARKSSAETEAKTQQFELPF).

It belongs to the DNA mismatch repair MutS family.

In terms of biological role, this protein is involved in the repair of mismatches in DNA. It is possible that it carries out the mismatch recognition step. This protein has a weak ATPase activity. The polypeptide is DNA mismatch repair protein MutS (Acaryochloris marina (strain MBIC 11017)).